Here is a 484-residue protein sequence, read N- to C-terminus: PTS system MurNAc-GlcNAc-specific EIIBC component (484 aa).

One can recognise a PTS EIIB type-1 domain in the interval 5-87; sequence QQLAERIIAA…AELSGVKLGD (83 aa). Catalysis depends on cysteine 27, which acts as the Phosphocysteine intermediate; for EIIB activity. The region spanning 130-484 is the PTS EIIC type-1 domain; the sequence is KSIANIFIPL…AMRQTDLLGD (355 aa). The next 10 membrane-spanning stretches (helical) occupy residues 135–155, 160–180, 200–220, 234–254, 274–294, 305–325, 349–369, 384–404, 408–428, and 450–470; these read IFIP…IAAV, MVAG…FNVI, FGAT…TGIA, LQPG…LSIV, IALL…AGFV, IISI…LPLV, LLPI…ALWV, ALPV…TLPL, FLTA…IGHI, and LGYI…TYLF.

The protein localises to the cell membrane. The enzyme catalyses N-acetyl-beta-D-muramate-(1-&gt;4)-N-acetyl-D-glucosamine(out) + N(pros)-phospho-L-histidyl-[protein] = 6-phospho-N-acetyl-beta-D-muramate-(1-&gt;4)-N-acetyl-D-glucosamine(in) + L-histidyl-[protein]. Its pathway is cell wall biogenesis; peptidoglycan recycling. Functionally, the phosphoenolpyruvate-dependent sugar phosphotransferase system (sugar PTS), a major carbohydrate active transport system, catalyzes the phosphorylation of incoming sugar substrates concomitantly with their translocation across the cell membrane. This system is involved in the uptake and phosphorylation of MurNAc-GlcNAc, the principle peptidoglycan turnover product of S.aureus, yielding cytoplasmic MurNAc 6P-GlcNAc. The sequence is that of PTS system MurNAc-GlcNAc-specific EIIBC component from Staphylococcus aureus (strain Mu50 / ATCC 700699).